We begin with the raw amino-acid sequence, 118 residues long: Large ribosomal subunit protein bL20 (118 aa).

It belongs to the bacterial ribosomal protein bL20 family.

Its function is as follows. Binds directly to 23S ribosomal RNA and is necessary for the in vitro assembly process of the 50S ribosomal subunit. It is not involved in the protein synthesizing functions of that subunit. The polypeptide is Large ribosomal subunit protein bL20 (Psychromonas ingrahamii (strain DSM 17664 / CCUG 51855 / 37)).